A 425-amino-acid chain; its full sequence is Dihydroorotase (425 aa).

2 residues coordinate Zn(2+): His61 and His63. Substrate-binding positions include 63–65 (HLR) and Asn95. Zn(2+)-binding residues include Asp153, His180, and His233. Substrate is bound at residue Asn279. Asp306 contributes to the Zn(2+) binding site. The active site involves Asp306. His310 is a binding site for substrate.

This sequence belongs to the metallo-dependent hydrolases superfamily. DHOase family. Class I DHOase subfamily. Requires Zn(2+) as cofactor.

It catalyses the reaction (S)-dihydroorotate + H2O = N-carbamoyl-L-aspartate + H(+). Its pathway is pyrimidine metabolism; UMP biosynthesis via de novo pathway; (S)-dihydroorotate from bicarbonate: step 3/3. In terms of biological role, catalyzes the reversible cyclization of carbamoyl aspartate to dihydroorotate. This is Dihydroorotase from Geobacter sp. (strain M21).